We begin with the raw amino-acid sequence, 198 residues long: Holliday junction branch migration complex subunit RuvA (198 aa).

The segment at 1 to 63 (MYDYIKGQLT…EDAHLLFGFH (63 aa)) is domain I. The domain II stretch occupies residues 64–142 (TEDEKDVFLK…EAPQETGNTK (79 aa)). The interval 143–147 (ARSNK) is flexible linker. The interval 148 to 198 (AGNTQLDEAIEALLALGYKAAELKKIRAFFEGTSETAEQYIKSALKLLMKG) is domain III.

Belongs to the RuvA family. In terms of assembly, homotetramer. Forms an RuvA(8)-RuvB(12)-Holliday junction (HJ) complex. HJ DNA is sandwiched between 2 RuvA tetramers; dsDNA enters through RuvA and exits via RuvB. An RuvB hexamer assembles on each DNA strand where it exits the tetramer. Each RuvB hexamer is contacted by two RuvA subunits (via domain III) on 2 adjacent RuvB subunits; this complex drives branch migration. In the full resolvosome a probable DNA-RuvA(4)-RuvB(12)-RuvC(2) complex forms which resolves the HJ.

The protein resides in the cytoplasm. Functionally, the RuvA-RuvB-RuvC complex processes Holliday junction (HJ) DNA during genetic recombination and DNA repair, while the RuvA-RuvB complex plays an important role in the rescue of blocked DNA replication forks via replication fork reversal (RFR). RuvA specifically binds to HJ cruciform DNA, conferring on it an open structure. The RuvB hexamer acts as an ATP-dependent pump, pulling dsDNA into and through the RuvAB complex. HJ branch migration allows RuvC to scan DNA until it finds its consensus sequence, where it cleaves and resolves the cruciform DNA. The polypeptide is Holliday junction branch migration complex subunit RuvA (Streptococcus pyogenes serotype M28 (strain MGAS6180)).